The primary structure comprises 1409 residues: DNA-directed RNA polymerase subunit beta' (1409 aa).

Residues C70, C72, C85, and C88 each coordinate Zn(2+). 3 residues coordinate Mg(2+): D458, D460, and D462. Zn(2+) is bound by residues C813, C887, C894, and C897.

This sequence belongs to the RNA polymerase beta' chain family. As to quaternary structure, the RNAP catalytic core consists of 2 alpha, 1 beta, 1 beta' and 1 omega subunit. When a sigma factor is associated with the core the holoenzyme is formed, which can initiate transcription. It depends on Mg(2+) as a cofactor. Zn(2+) serves as cofactor.

The catalysed reaction is RNA(n) + a ribonucleoside 5'-triphosphate = RNA(n+1) + diphosphate. Its function is as follows. DNA-dependent RNA polymerase catalyzes the transcription of DNA into RNA using the four ribonucleoside triphosphates as substrates. This is DNA-directed RNA polymerase subunit beta' from Acidovorax ebreus (strain TPSY) (Diaphorobacter sp. (strain TPSY)).